The chain runs to 335 residues: tRNA N6-adenosine threonylcarbamoyltransferase (335 aa).

Positions 107 and 111 each coordinate Fe cation. Residues 129–133, Asp-162, Gly-175, and Asn-268 contribute to the substrate site; that span reads LVSGG. Asp-296 provides a ligand contact to Fe cation.

This sequence belongs to the KAE1 / TsaD family. It depends on Fe(2+) as a cofactor.

The protein resides in the cytoplasm. It carries out the reaction L-threonylcarbamoyladenylate + adenosine(37) in tRNA = N(6)-L-threonylcarbamoyladenosine(37) in tRNA + AMP + H(+). Its function is as follows. Required for the formation of a threonylcarbamoyl group on adenosine at position 37 (t(6)A37) in tRNAs that read codons beginning with adenine. Is involved in the transfer of the threonylcarbamoyl moiety of threonylcarbamoyl-AMP (TC-AMP) to the N6 group of A37, together with TsaE and TsaB. TsaD likely plays a direct catalytic role in this reaction. This is tRNA N6-adenosine threonylcarbamoyltransferase from Campylobacter fetus subsp. fetus (strain 82-40).